The primary structure comprises 246 residues: Small ribosomal subunit protein uS2 (246 aa).

It belongs to the universal ribosomal protein uS2 family.

In Burkholderia cenocepacia (strain HI2424), this protein is Small ribosomal subunit protein uS2.